Here is a 142-residue protein sequence, read N- to C-terminus: MFQGASALTLDAKGRMSIPSRYRDALQTQAEGRVTITKHPDGCLLLFPRPEWEIFRDKVDKLPMNATWWKRIFLGNAMDVEMDGAGRVLVSPELRTAGGLEKEVTLLGMGRHFELWDAQTYAAKEQAAMAEGMPDALKDFTF.

SpoVT-AbrB domains are found at residues 5 to 51 (ASAL…PRPE) and 77 to 120 (AMDV…DAQT).

This sequence belongs to the MraZ family. In terms of assembly, forms oligomers.

Its subcellular location is the cytoplasm. The protein localises to the nucleoid. The chain is Transcriptional regulator MraZ from Paraburkholderia phytofirmans (strain DSM 17436 / LMG 22146 / PsJN) (Burkholderia phytofirmans).